Here is a 552-residue protein sequence, read N- to C-terminus: MAGUK p55 subfamily member 2 (552 aa).

L27 domains are found at residues 8–59 (SESA…EETK) and 60–118 (LEAV…YETP). The residue at position 42 (serine 42) is a Phosphoserine. Threonine 117 is modified (phosphothreonine). Serine 121 is subject to Phosphoserine. One can recognise a PDZ domain in the interval 140–219 (MVGIRKTAGE…SVILKILPSY (80 aa)). An SH3 domain is found at 225–293 (PRQVFVKCHF…PSQLLEEKRK (69 aa)). In terms of domain architecture, Guanylate kinase-like spans 350 to 537 (RKTLVLIGAQ…TFRELQTAME (188 aa)).

Belongs to the MAGUK family. In terms of assembly, can homomultimerise. Interacts with CACNG2. Interacts (via the SH3-Guanylate kinase-like sub-module) with DLG4/PSD95 and DLGAP1/GKAP. Interacts (via the PDZ domain) with CADM1 (via C-terminus). Interacts with KCNN2/SK2 (via N-terminal domain). Interacts with SRC. In terms of processing, phosphorylated by SRC. In terms of tissue distribution, expressed in hippocampal neurons.

Its subcellular location is the cell projection. The protein resides in the dendrite. The protein localises to the postsynaptic density. It localises to the cytoplasm. It is found in the cytoskeleton. Its subcellular location is the membrane. Postsynaptic MAGUK scaffold protein that links CADM1 cell adhesion molecules to core components of the postsynaptic density. In CA1 pyramidal neurons, required for synaptic KCNN2-containing channel function and long-term potentiation expression. Seems to negatively regulate SRC function in epithelial cells. The polypeptide is MAGUK p55 subfamily member 2 (Rattus norvegicus (Rat)).